A 497-amino-acid chain; its full sequence is Vacuolar-processing enzyme beta-isozyme 1 (497 aa).

The first 23 residues, 1-23 (MAARCWVWGFVVALLAVAAAADG), serve as a signal peptide directing secretion. N-linked (GlcNAc...) asparagine glycosylation is present at Asn-153. Residue His-180 is part of the active site. The Nucleophile role is filled by Cys-222. A disulfide bridge links Cys-255 with Cys-269. N-linked (GlcNAc...) asparagine glycosylation is present at Asn-340. Disulfide bonds link Cys-432–Cys-462 and Cys-444–Cys-479.

This sequence belongs to the peptidase C13 family. Auto-catalytic activation.

The protein localises to the protein storage vacuole. It carries out the reaction Hydrolysis of proteins and small molecule substrates at -Asn-|-Xaa- bonds.. In terms of biological role, asparagine-specific endopeptidase that may be involved in processing of proteins targeted to vacuoles. Cysteine protease required for post-translational proteolysis of seed storage proteins in the protein storage vacuole (PSV) of developing seeds, by processing of proglutelin precursor to mature glutelin subunits, thus contributing to the formation of protein crystalline structures in PSV. The sequence is that of Vacuolar-processing enzyme beta-isozyme 1 from Oryza sativa subsp. indica (Rice).